The chain runs to 502 residues: ATP synthase subunit alpha (502 aa).

An ATP-binding site is contributed by 169–176 (GDRQTGKT).

It belongs to the ATPase alpha/beta chains family. F-type ATPases have 2 components, CF(1) - the catalytic core - and CF(0) - the membrane proton channel. CF(1) has five subunits: alpha(3), beta(3), gamma(1), delta(1), epsilon(1). CF(0) has three main subunits: a(1), b(2) and c(9-12). The alpha and beta chains form an alternating ring which encloses part of the gamma chain. CF(1) is attached to CF(0) by a central stalk formed by the gamma and epsilon chains, while a peripheral stalk is formed by the delta and b chains.

It is found in the cell inner membrane. It carries out the reaction ATP + H2O + 4 H(+)(in) = ADP + phosphate + 5 H(+)(out). Produces ATP from ADP in the presence of a proton gradient across the membrane. The alpha chain is a regulatory subunit. In Nitratidesulfovibrio vulgaris (strain DSM 19637 / Miyazaki F) (Desulfovibrio vulgaris), this protein is ATP synthase subunit alpha.